We begin with the raw amino-acid sequence, 373 residues long: Glutamate 5-kinase (373 aa).

Lysine 15 serves as a coordination point for ATP. Residues serine 55, aspartate 142, and asparagine 154 each coordinate substrate. ATP is bound by residues 174–175 and 216–222; these read TD and TGGMVTK. Residues 281-359 enclose the PUA domain; sequence SGRVIVDDGA…GEIEAILGYK (79 aa).

Belongs to the glutamate 5-kinase family.

The protein localises to the cytoplasm. The enzyme catalyses L-glutamate + ATP = L-glutamyl 5-phosphate + ADP. It participates in amino-acid biosynthesis; L-proline biosynthesis; L-glutamate 5-semialdehyde from L-glutamate: step 1/2. Functionally, catalyzes the transfer of a phosphate group to glutamate to form L-glutamate 5-phosphate. This chain is Glutamate 5-kinase, found in Geobacter metallireducens (strain ATCC 53774 / DSM 7210 / GS-15).